Consider the following 111-residue polypeptide: Cytochrome c-550 (111 aa).

The heme c site is built by cysteine 13, cysteine 16, histidine 17, and methionine 90.

Binds 1 heme c group covalently per subunit.

The polypeptide is Cytochrome c-550 (Novispirillum itersonii (Aquaspirillum itersonii)).